The primary structure comprises 590 residues: Glutamine--fructose-6-phosphate aminotransferase [isomerizing] (590 aa).

C2 serves as the catalytic Nucleophile; for GATase activity. Residues 2–221 form the Glutamine amidotransferase type-2 domain; it reads CGIIGIVSSK…DGELGFITTS (220 aa). 2 consecutive SIS domains span residues 286–422 and 445–580; these read IIAE…DNTN and IGEE…PDKP. K585 functions as the For Fru-6P isomerization activity in the catalytic mechanism.

Homodimer.

Its subcellular location is the cytoplasm. It catalyses the reaction D-fructose 6-phosphate + L-glutamine = D-glucosamine 6-phosphate + L-glutamate. Its function is as follows. Catalyzes the first step in hexosamine metabolism, converting fructose-6P into glucosamine-6P using glutamine as a nitrogen source. This is Glutamine--fructose-6-phosphate aminotransferase [isomerizing] from Sulfolobus acidocaldarius (strain ATCC 33909 / DSM 639 / JCM 8929 / NBRC 15157 / NCIMB 11770).